A 354-amino-acid polypeptide reads, in one-letter code: Elongation factor Ts, mitochondrial (354 aa).

A mitochondrion-targeting transit peptide spans 1-47 (MMRSTLSLLQKCRLPNNNGSLLSFKNNQVVNQTALFSMKSNQQYRFY).

This sequence belongs to the EF-Ts family.

It localises to the mitochondrion. In terms of biological role, associates with the EF-Tu.GDP complex and induces the exchange of GDP to GTP. It remains bound to the aminoacyl-tRNA.EF-Tu.GTP complex up to the GTP hydrolysis stage on the ribosome. The sequence is that of Elongation factor Ts, mitochondrial (tsfm) from Heterostelium pallidum (strain ATCC 26659 / Pp 5 / PN500) (Cellular slime mold).